We begin with the raw amino-acid sequence, 129 residues long: Tumor necrosis factor receptor superfamily member 12A (129 aa).

The N-terminal stretch at 1 to 27 is a signal peptide; sequence MASAWPRSLPQILVLGFGLVLMRAAAG. Over 28 to 80 the chain is Extracellular; it reads EQAPGTSPCSSGSSWSADLDKCMDCASCPARPHSDFCLGCAAAPPAHFRLLWP. 3 disulfide bridges follow: cysteine 36–cysteine 49, cysteine 52–cysteine 67, and cysteine 55–cysteine 64. A TNFR-Cys; atypical repeat occupies 36-67; the sequence is CSSGSSWSADLDKCMDCASCPARPHSDFCLGC. The helical transmembrane segment at 81–101 threads the bilayer; that stretch reads ILGGALSLVLVLALVSSFLVW. Over 102–129 the chain is Cytoplasmic; sequence RRCRRREKFTTPIEETGGEGCPGVALIQ.

As to quaternary structure, associates with TRAF1 and TRAF2, and probably also with TRAF3. Highly expressed in fetal heart, intestine, kidney, liver, lung and skin, and in adult heart and ovary. Intermediate expression in adult kidney, lung and skin.

It localises to the membrane. Functionally, receptor for TNFSF12/TWEAK. Weak inducer of apoptosis in some cell types. Promotes angiogenesis and the proliferation of endothelial cells. May modulate cellular adhesion to matrix proteins. This Mus musculus (Mouse) protein is Tumor necrosis factor receptor superfamily member 12A (Tnfrsf12a).